The sequence spans 152 residues: Cytochrome c-type biogenesis CcmH-like mitochondrial protein (152 aa).

Topologically, residues 1–83 (MATEEDVKQR…ILYTPKFDLQ (83 aa)) are mitochondrial intermembrane. Heme is bound by residues C26 and C29. The helical transmembrane segment at 84–104 (TAAIWLSPVIVGGVAAGVWAY) threads the bilayer. Topologically, residues 105-152 (QKHRQRTNVHIMALNLVRGVPLTPREKETMLDVLTPPPPANKWWWPGK) are mitochondrial matrix.

The protein belongs to the CcmH/CycL/Ccl2/NrfF family.

The protein resides in the mitochondrion inner membrane. Functionally, plays a role in mitochondrial cytochrome c maturation. Probable component of a heme lyase complex involved in the reduction of apocytochrome c. The chain is Cytochrome c-type biogenesis CcmH-like mitochondrial protein from Oryza sativa subsp. japonica (Rice).